The primary structure comprises 1909 residues: Plexin-B3 (1909 aa).

The first 44 residues, 1 to 44 (MCHAAQETPLLHHFMAPVMARWPPFGLCLLLLLLSPPPLPLTGA), serve as a signal peptide directing secretion. One can recognise a Sema domain in the interval 45-471 (HRFSAPNTTL…TAHQVDRIPV (427 aa)). At 45-1255 (HRFSAPNTTL…PLSAFPVEAQ (1211 aa)) the chain is on the extracellular side. A glycan (N-linked (GlcNAc...) asparagine) is linked at N51. 2 disulfide bridges follow: C98/C107 and C132/C140. N231 is a glycosylation site (N-linked (GlcNAc...) asparagine). Disulfide bonds link C267–C370, C283–C315, C333–C357, C474–C491, C480–C525, C483–C500, C494–C506, and C562–C580. The 54-residue stretch at 473-526 (ACPQFPDCASCLQAQDPLCGWCVLQGRCTRKGQCGRAGQLNQWLWSYEEDSHCL) folds into the PSI 1 domain. N615 is a glycosylation site (N-linked (GlcNAc...) asparagine). PSI domains follow at residues 620 to 682 (DCSA…GACP) and 787 to 833 (DCAM…LLCP). Residues N802, N900, N957, N1101, and N1218 are each glycosylated (N-linked (GlcNAc...) asparagine). IPT/TIG domains lie at 835–925 (PSID…FTYQ), 927–1012 (PVLL…FRYT), 1015–1145 (PQLV…FLYQ), and 1159–1244 (ARPY…YEAE). The helical transmembrane segment at 1256–1276 (AGVGMGAAVLIAAVLLLTLMY) threads the bilayer. The Cytoplasmic segment spans residues 1277–1909 (RHKSKQALRD…ALVENKVTDL (633 aa)).

It belongs to the plexin family. As to quaternary structure, interacts (via cytoplasmic domain) with RAC1 and ARHGDIA. Binds MET and MST1R. Interacts (via cytoplasmic domain) with FSCN1. Interacts with RIT2/RIN. May form homodimers (via Sema domain). As to expression, expression detected in Purkinje and granular cells in cerebellum, and in brain neocortex but not in corpus callosum. Expressed in glioma cells and embryonic kidney cells (at protein level). Expressed in brain, liver, pancreas and placenta, with weak expression detected also in lung and kidney. Expressed in several glioma cell lines.

The protein resides in the cell membrane. Its function is as follows. Receptor for SEMA5A that plays a role in axon guidance, invasive growth and cell migration. Stimulates neurite outgrowth and mediates Ca(2+)/Mg(2+)-dependent cell aggregation. In glioma cells, SEMA5A stimulation of PLXNB3 results in the disassembly of F-actin stress fibers, disruption of focal adhesions and cellular collapse as well as inhibition of cell migration and invasion through ARHGDIA-mediated inactivation of RAC1. The chain is Plexin-B3 (PLXNB3) from Homo sapiens (Human).